A 326-amino-acid polypeptide reads, in one-letter code: GTP 3',8-cyclase (326 aa).

The Radical SAM core domain occupies 6-220; that stretch reads SFGRRINYLR…DRISASYELE (215 aa). Arg15 contacts GTP. [4Fe-4S] cluster-binding residues include Cys22 and Cys26. S-adenosyl-L-methionine is bound at residue Tyr28. Cys29 contacts [4Fe-4S] cluster. Residue Arg65 participates in GTP binding. Gly69 lines the S-adenosyl-L-methionine pocket. Residue Thr96 coordinates GTP. Ser120 serves as a coordination point for S-adenosyl-L-methionine. Lys157 lines the GTP pocket. Met191 is an S-adenosyl-L-methionine binding site. Cys254 and Cys257 together coordinate [4Fe-4S] cluster. Residue 259–261 participates in GTP binding; that stretch reads RVR. Residue Cys271 coordinates [4Fe-4S] cluster.

It belongs to the radical SAM superfamily. MoaA family. As to quaternary structure, monomer and homodimer. The cofactor is [4Fe-4S] cluster.

The enzyme catalyses GTP + AH2 + S-adenosyl-L-methionine = (8S)-3',8-cyclo-7,8-dihydroguanosine 5'-triphosphate + 5'-deoxyadenosine + L-methionine + A + H(+). The protein operates within cofactor biosynthesis; molybdopterin biosynthesis. In terms of biological role, catalyzes the cyclization of GTP to (8S)-3',8-cyclo-7,8-dihydroguanosine 5'-triphosphate. This Geobacter sulfurreducens (strain ATCC 51573 / DSM 12127 / PCA) protein is GTP 3',8-cyclase.